The following is a 557-amino-acid chain: Glutamyl-tRNA(Gln) amidotransferase subunit B, mitochondrial (557 aa).

The transit peptide at 1 to 41 (MAAPMLRWGCRGRRWAFARVDGGSCHRRGAPTGSTSNQIRG) directs the protein to the mitochondrion. Residues 26–45 (HRRGAPTGSTSNQIRGESSV) are disordered. The span at 32–45 (TGSTSNQIRGESSV) shows a compositional bias: polar residues. Residue K529 is modified to N6-succinyllysine.

This sequence belongs to the GatB/GatE family. GatB subfamily. In terms of assembly, subunit of the heterotrimeric GatCAB amidotransferase (AdT) complex, composed of A (QRSL1), B (GATB) and C (GATC) subunits. In terms of tissue distribution, predominantly expressed in tissues characterized by high rates of oxidative phosphorylation (OxPhos), including muscle and heart.

The protein resides in the mitochondrion. It catalyses the reaction L-glutamyl-tRNA(Gln) + L-glutamine + ATP + H2O = L-glutaminyl-tRNA(Gln) + L-glutamate + ADP + phosphate + H(+). Its function is as follows. Allows the formation of correctly charged Gln-tRNA(Gln) through the transamidation of misacylated Glu-tRNA(Gln) in the mitochondria. The reaction takes place in the presence of glutamine and ATP through an activated gamma-phospho-Glu-tRNA(Gln). This chain is Glutamyl-tRNA(Gln) amidotransferase subunit B, mitochondrial, found in Homo sapiens (Human).